Reading from the N-terminus, the 377-residue chain is Phosphatidylglycerol--prolipoprotein diacylglyceryl transferase (377 aa).

4 consecutive transmembrane segments (helical) span residues 18–38 (PVPLRAYALMIIIGIVVAVVV), 48–68 (MDPALAGEIAYWAVPFGIVGA), 93–113 (IWNGGLGIWGAIAGGALGAWL), and 119–139 (GISLALFADAAAPGIILAQAI). R141 serves as a coordination point for a 1,2-diacyl-sn-glycero-3-phospho-(1'-sn-glycerol). 3 helical membrane passes run 177–197 (QPTFLYEFLWNLVVAAILLLV), 208–228 (LFALYVALYTFGRLWIEMLRI), and 238–258 (RVNIWTSAIVCVGAVVALLVV). The tract at residues 265-377 (DVSPQEQRAL…RTRVERPPAT (113 aa)) is disordered. Low complexity-rich tracts occupy residues 288–297 (AAGETAGETR) and 308–344 (GVDVNGADVDGADPSNVNGANVNGADPVNVNVNDADG).

The protein belongs to the Lgt family.

Its subcellular location is the cell membrane. The catalysed reaction is L-cysteinyl-[prolipoprotein] + a 1,2-diacyl-sn-glycero-3-phospho-(1'-sn-glycerol) = an S-1,2-diacyl-sn-glyceryl-L-cysteinyl-[prolipoprotein] + sn-glycerol 1-phosphate + H(+). It functions in the pathway protein modification; lipoprotein biosynthesis (diacylglyceryl transfer). Functionally, catalyzes the transfer of the diacylglyceryl group from phosphatidylglycerol to the sulfhydryl group of the N-terminal cysteine of a prolipoprotein, the first step in the formation of mature lipoproteins. The chain is Phosphatidylglycerol--prolipoprotein diacylglyceryl transferase from Frankia alni (strain DSM 45986 / CECT 9034 / ACN14a).